Here is a 324-residue protein sequence, read N- to C-terminus: tRNA N6-adenosine threonylcarbamoyltransferase (324 aa).

Residues His107, His111, and Tyr127 each coordinate Fe cation. Substrate contacts are provided by residues 127–131 (YVSGG), Asp159, Gly172, Glu176, and Asn257. Asp285 provides a ligand contact to Fe cation.

It belongs to the KAE1 / TsaD family. In terms of assembly, monomer. Component of the KEOPS complex that consists of Kae1, Bud32, Cgi121 and Pcc1; the whole complex dimerizes. The cofactor is Fe(2+).

Its subcellular location is the cytoplasm. The enzyme catalyses L-threonylcarbamoyladenylate + adenosine(37) in tRNA = N(6)-L-threonylcarbamoyladenosine(37) in tRNA + AMP + H(+). In terms of biological role, required for the formation of a threonylcarbamoyl group on adenosine at position 37 (t(6)A37) in tRNAs that read codons beginning with adenine. Is a component of the KEOPS complex that is probably involved in the transfer of the threonylcarbamoyl moiety of threonylcarbamoyl-AMP (TC-AMP) to the N6 group of A37. Kae1 likely plays a direct catalytic role in this reaction, but requires other protein(s) of the complex to fulfill this activity. The protein is tRNA N6-adenosine threonylcarbamoyltransferase of Pyrococcus furiosus (strain ATCC 43587 / DSM 3638 / JCM 8422 / Vc1).